The primary structure comprises 431 residues: Glucose-1-phosphate adenylyltransferase (431 aa).

A beta-D-fructose 1,6-bisphosphate-binding site is contributed by Lys39. 3 residues coordinate AMP: Arg40, His46, and Arg52. Residue Tyr114 coordinates alpha-D-glucose 1-phosphate. Arg130 is an AMP binding site. Alpha-D-glucose 1-phosphate contacts are provided by residues Gly179, 194–195 (EK), and Ser212. AMP is bound by residues Glu370 and Arg386. Beta-D-fructose 1,6-bisphosphate-binding positions include 419–423 (REMLR) and 429–431 (QER).

Belongs to the bacterial/plant glucose-1-phosphate adenylyltransferase family. In terms of assembly, homotetramer.

It carries out the reaction alpha-D-glucose 1-phosphate + ATP + H(+) = ADP-alpha-D-glucose + diphosphate. It participates in glycan biosynthesis; glycogen biosynthesis. With respect to regulation, allosterically activated by fructose-1,6-bisphosphate (F16BP) and inhibited by AMP. In terms of biological role, involved in the biosynthesis of ADP-glucose, a building block required for the elongation reactions to produce glycogen. Catalyzes the reaction between ATP and alpha-D-glucose 1-phosphate (G1P) to produce pyrophosphate and ADP-Glc. This is Glucose-1-phosphate adenylyltransferase from Escherichia coli O127:H6 (strain E2348/69 / EPEC).